We begin with the raw amino-acid sequence, 462 residues long: Calcitonin gene-related peptide type 1 receptor (462 aa).

The first 22 residues, 1 to 22, serve as a signal peptide directing secretion; sequence MEKKYILYFLFLLPFFMILVIA. Topologically, residues 23–140 are extracellular; the sequence is ETEEENPDDL…NTHEKVQTAL (118 aa). Disulfide bonds link Cys-49/Cys-75, Cys-66/Cys-106, and Cys-89/Cys-128. N-linked (GlcNAc...) asparagine glycans are attached at residues Asn-67, Asn-119, and Asn-124. Residues 141–165 traverse the membrane as a helical segment; sequence NLFYLTIIGHGLSIASLLISLGIFF. Topologically, residues 166-176 are cytoplasmic; it reads YFKSLSCQRIT. The chain crosses the membrane as a helical span at residues 177-199; the sequence is LHKNLFFSFVCNSIVTIIHLTAV. Topologically, residues 200 to 210 are extracellular; the sequence is ANNQALVATNP. The helical transmembrane segment at 211 to 239 threads the bilayer; sequence VSCKVFQFIHLYLMGCNYFWMLCEGIYLH. At 240–253 the chain is on the cytoplasmic side; sequence TLIVVAVFAEKQHL. A helical transmembrane segment spans residues 254 to 274; sequence MWYYFLGWGFPLIPACIHAVA. Residues 275–290 lie on the Extracellular side of the membrane; sequence RRLYYNDNCWISSDTH. Positions 289 to 290 are required for RAMP3 interaction; that stretch reads TH. The helical transmembrane segment at 291–315 threads the bilayer; sequence LLYIIHGPICAALLVNLFFLLNIVR. The Cytoplasmic portion of the chain corresponds to 316–330; that stretch reads VLITKLKVTHQAESN. A helical transmembrane segment spans residues 331–352; that stretch reads LYMKAVRATLILVPLLGIEFVL. At 353 to 367 the chain is on the extracellular side; it reads IPWRPEGKIAEEVYD. Residues 368–388 traverse the membrane as a helical segment; sequence YIMHILVHYQGLLVSTIYCFF. Topologically, residues 389–462 are cytoplasmic; it reads NGEVQAILRR…IVIKPEKLYD (74 aa). Ser-421 and Ser-446 each carry phosphoserine.

Belongs to the G-protein coupled receptor 2 family. In terms of assembly, heterodimer of CALCRL and RAMP1; the receptor complex functions as CGRP receptor. Heterodimer of CALCRL and RAMP2 or CALCRL and RAMP3; the complexes function as adrenomedullin receptor. Detected in lung and coronary artery.

The protein resides in the cell membrane. Functionally, g protein-coupled receptor which specificity is determined by its interaction with receptor-activity-modifying proteins (RAMPs). Together with RAMP1, form the receptor complex for calcitonin-gene-related peptides CALCA/CGRP1 and CALCB/CGRP2. Together with RAMP2 or RAMP3, function as receptor complexes for adrenomedullin (ADM and ADM2). Ligand binding causes a conformation change that triggers signaling via guanine nucleotide-binding proteins (G proteins) and modulates the activity of downstream effectors. Activates cAMP-dependent pathway. This is Calcitonin gene-related peptide type 1 receptor (CALCRL) from Sus scrofa (Pig).